The sequence spans 242 residues: MAKVSMRDMLQAGVHFGHQTRYWNPKMKSYIFGARSKVHIINLEKTVPMFDDAMNFISSVAAKKGKVLFVGTKRAASEAVKDAAGRCDQFYVNHRWLGGMLTNWKTVRQSIKRLKDLETQSQDGTFEKLTKKEALMRTREMDKLEKSLGGIKNMGGLPDVLFVVDADHEHIAIKEANNLGIPVVSIVDTNSNPDGVDYVIPGNDDAIRAVQLYLNAAADTVLEARAQDIVVQAEQDGFVEAE.

Belongs to the universal ribosomal protein uS2 family.

The sequence is that of Small ribosomal subunit protein uS2 from Aeromonas salmonicida (strain A449).